The sequence spans 428 residues: Histidine--tRNA ligase (428 aa).

Belongs to the class-II aminoacyl-tRNA synthetase family. As to quaternary structure, homodimer.

It is found in the cytoplasm. The enzyme catalyses tRNA(His) + L-histidine + ATP = L-histidyl-tRNA(His) + AMP + diphosphate + H(+). In Lactobacillus delbrueckii subsp. bulgaricus (strain ATCC 11842 / DSM 20081 / BCRC 10696 / JCM 1002 / NBRC 13953 / NCIMB 11778 / NCTC 12712 / WDCM 00102 / Lb 14), this protein is Histidine--tRNA ligase.